The sequence spans 337 residues: D-alanine--D-alanine ligase (337 aa).

Residues 124–330 (KMWFSALGIP…FTEYLSLVIN (207 aa)) form the ATP-grasp domain. 154–209 (ALAQWGSIFVKAASQGSSVGCYKVDDSAKVAGVLKDAFGYAPYVIVEKTIKARELE) contacts ATP. Mg(2+) is bound by residues Asp-284, Glu-297, and Asn-299.

This sequence belongs to the D-alanine--D-alanine ligase family. It depends on Mg(2+) as a cofactor. The cofactor is Mn(2+).

The protein resides in the cytoplasm. It carries out the reaction 2 D-alanine + ATP = D-alanyl-D-alanine + ADP + phosphate + H(+). Its pathway is cell wall biogenesis; peptidoglycan biosynthesis. Its function is as follows. Cell wall formation. The polypeptide is D-alanine--D-alanine ligase (Shewanella baltica (strain OS185)).